Here is a 105-residue protein sequence, read N- to C-terminus: U21-theraphotoxin-Cg1a 4 (105 aa).

Positions 1-21 are cleaved as a signal peptide; sequence MKVSVLITLAVLGVMFLLTSA. A propeptide spanning residues 22–48 is cleaved from the precursor; the sequence is EERGSDQMDSPAWLKSMEIIFQSEERE. Intrachain disulfides connect Cys-49/Cys-63, Cys-56/Cys-68, and Cys-62/Cys-76. Val-82 is subject to Valine amide. Residues 83 to 105 constitute a propeptide that is removed on maturation; the sequence is GKWEMLINMNIFRIVFSYSMCTV.

This sequence belongs to the neurotoxin 10 (Hwtx-1) family. 05 (F4a) subfamily. Expressed by the venom gland.

The protein resides in the secreted. Probable ion channel inhibitor. The polypeptide is U21-theraphotoxin-Cg1a 4 (Chilobrachys guangxiensis (Chinese earth tiger tarantula)).